The chain runs to 853 residues: Rod cGMP-specific 3',5'-cyclic phosphodiesterase subunit beta (853 aa).

S2 carries the N-acetylserine modification. 2 GAF domains span residues 71 to 220 (NMER…TLNL) and 252 to 429 (DIER…GWSV). A PDEase domain is found at 481-814 (EEDELGKILK…KEWKALADEY (334 aa)). H557 acts as the Proton donor in catalysis. A divalent metal cation contacts are provided by H561, H597, D598, and D718. C850 carries the cysteine methyl ester modification. C850 is lipidated: S-geranylgeranyl cysteine. Positions 851–853 (RIL) are cleaved as a propeptide — removed in mature form.

This sequence belongs to the cyclic nucleotide phosphodiesterase family. In terms of assembly, oligomer composed of two catalytic chains (alpha and beta), an inhibitory chain (gamma) and the delta chain. It depends on a divalent metal cation as a cofactor.

The protein resides in the membrane. It localises to the cell projection. The protein localises to the cilium. It is found in the photoreceptor outer segment. It carries out the reaction 3',5'-cyclic GMP + H2O = GMP + H(+). Functionally, necessary for the formation of a functional phosphodiesterase holoenzyme. Involved in retinal circadian rhythm photoentrainment via modulation of UVA and orange light-induced phase-shift of the retina clock. May participate in processes of transmission and amplification of the visual signal. Rod-specific cGMP phosphodiesterase that catalyzes the hydrolysis of 3',5'-cyclic GMP. Necessary for the formation of a functional phosphodiesterase holoenzyme. Involved in retinal circadian rhythm photoentrainment via modulation of UVA and orange light-induced phase-shift of the retina clock. May participate in processes of transmission and amplification of the visual signal. The protein is Rod cGMP-specific 3',5'-cyclic phosphodiesterase subunit beta (PDE6B) of Bos taurus (Bovine).